A 5628-amino-acid polypeptide reads, in one-letter code: Polyketide synthase ThaG (5628 aa).

In terms of domain architecture, Ketosynthase family 3 (KS3) 1 spans 13 to 448; the sequence is HDDIAVIGIA…GTNAHVVLRE (436 aa). Residues C184, H319, and H361 each act as for beta-ketoacyl synthase 1 activity in the active site. 2 disordered regions span residues 552–613 and 1156–1183; these read GNLV…DGPT and ASPG…RAEA. The span at 559–589 shows a compositional bias: basic and acidic residues; that stretch reads GPHDEQADHDGSGEHGEHGERARAGADDLSR. The segment covering 1156 to 1173 has biased composition (low complexity); that stretch reads ASPGAASSGAAAPNAASD. Positions 1174-1183 are enriched in basic and acidic residues; that stretch reads ASRDTERAEA. One can recognise a Carrier 1 domain in the interval 1209 to 1286; the sequence is AHGSARLPAL…RLAGHLATRL (78 aa). Residue S1246 is modified to O-(pantetheine 4'-phosphoryl)serine. Positions 1373–1781 constitute a Ketosynthase family 3 (KS3) 2 domain; the sequence is YEPIAIVGMS…GTNAHVIVEA (409 aa). Active-site for beta-ketoacyl synthase 2 activity residues include C1529, H1664, and H1704. The N-terminal hotdog fold 1 stretch occupies residues 1967 to 2099; that stretch reads AREPGARERA…GVVDELNEPA (133 aa). In terms of domain architecture, PKS/mFAS DH 1 spans 1967–2261; that stretch reads AREPGARERA…SARWRKLAGA (295 aa). H1999 functions as the Proton acceptor; for dehydratase activity 1 in the catalytic mechanism. The tract at residues 2113–2261 is C-terminal hotdog fold 1; it reads AGERVDGAAL…SARWRKLAGA (149 aa). Residue D2175 is the Proton donor; for dehydratase activity 1 of the active site. Residues 2426-2446 are disordered; the sequence is DADEDDRDGREPAGGPPLRDD. The Carrier 2 domain maps to 2702 to 2780; sequence PAARVDLHAL…AIARALDASA (79 aa). Residues 2817 to 2836 form a disordered region; the sequence is TPPDAGAPQRGAHAAAAEGS. Over residues 2822 to 2835 the composition is skewed to low complexity; that stretch reads GAPQRGAHAAAAEG. The region spanning 2862–2935 is the Carrier 3 domain; sequence ARVGARLSAL…ELTDYFVRRH (74 aa). S2896 carries the O-(pantetheine 4'-phosphoryl)serine modification. One can recognise a Ketosynthase family 3 (KS3) 3 domain in the interval 3005 to 3430; sequence ADAIAVIGLA…GANAHVIVRE (426 aa). Catalysis depends on for beta-ketoacyl synthase 3 activity residues C3175, H3310, and H3351. The segment at 3526 to 3546 is disordered; sequence PGKKQLRGNGRARRGDAPPAG. The N-terminal hotdog fold 2 stretch occupies residues 3621 to 3743; it reads HPMLDANRSE…GRSPSRAARG (123 aa). The PKS/mFAS DH 2 domain maps to 3621 to 3895; sequence HPMLDANRSE…SRAAASWRTA (275 aa). H3650 functions as the Proton acceptor; for dehydratase activity 2 in the catalytic mechanism. The C-terminal hotdog fold 2 stretch occupies residues 3758–3895; it reads RAAPAFDADA…SRAAASWRTA (138 aa). Residue D3818 is the Proton donor; for dehydratase activity 2 of the active site. The segment at 3917–3942 is disordered; the sequence is PAAESPSAATSTSAATSPAISTSAAT. The Carrier 4 domain maps to 4840–4914; that stretch reads TRTAALLRSL…ALAAYVGSQL (75 aa). S4874 carries the post-translational modification O-(pantetheine 4'-phosphoryl)serine. A disordered region spans residues 4960–4992; sequence APRARTGADAPDTSLASSASSISSARASSPASP. Positions 4998-5424 constitute a Ketosynthase family 3 (KS3) 4 domain; the sequence is SFDVAIVGAS…GVNAHVVLEE (427 aa). Active-site for beta-ketoacyl synthase 4 activity residues include C5158, H5293, and H5339. The Carrier 5 domain occupies 5470–5544; sequence ARIEAVIRDA…ALRDHVAERI (75 aa). At S5504 the chain carries O-(pantetheine 4'-phosphoryl)serine. The tract at residues 5573 to 5603 is disordered; it reads VSEATEASDASEASDASEASEASEASEASKA.

Requires pantetheine 4'-phosphate as cofactor.

It localises to the cytoplasm. It participates in antibiotic biosynthesis. Its function is as follows. Involved in production of the polyketide antibiotic thailandamide. In Burkholderia thailandensis (strain ATCC 700388 / DSM 13276 / CCUG 48851 / CIP 106301 / E264), this protein is Polyketide synthase ThaG.